A 232-amino-acid chain; its full sequence is Pyridoxine 5'-phosphate synthase (232 aa).

A 3-amino-2-oxopropyl phosphate-binding site is contributed by Asn-7. Residue 9–10 (DH) participates in 1-deoxy-D-xylulose 5-phosphate binding. Arg-18 serves as a coordination point for 3-amino-2-oxopropyl phosphate. The active-site Proton acceptor is the His-43. Arg-45 and His-50 together coordinate 1-deoxy-D-xylulose 5-phosphate. The Proton acceptor role is filled by Glu-69. 1-deoxy-D-xylulose 5-phosphate is bound at residue Thr-99. His-185 (proton donor) is an active-site residue. 3-amino-2-oxopropyl phosphate is bound by residues Gly-186 and 207 to 208 (GH).

The protein belongs to the PNP synthase family. In terms of assembly, homooctamer; tetramer of dimers.

Its subcellular location is the cytoplasm. It carries out the reaction 3-amino-2-oxopropyl phosphate + 1-deoxy-D-xylulose 5-phosphate = pyridoxine 5'-phosphate + phosphate + 2 H2O + H(+). The protein operates within cofactor biosynthesis; pyridoxine 5'-phosphate biosynthesis; pyridoxine 5'-phosphate from D-erythrose 4-phosphate: step 5/5. Its function is as follows. Catalyzes the complicated ring closure reaction between the two acyclic compounds 1-deoxy-D-xylulose-5-phosphate (DXP) and 3-amino-2-oxopropyl phosphate (1-amino-acetone-3-phosphate or AAP) to form pyridoxine 5'-phosphate (PNP) and inorganic phosphate. The sequence is that of Pyridoxine 5'-phosphate synthase from Gluconobacter oxydans (strain 621H) (Gluconobacter suboxydans).